The chain runs to 343 residues: 3-oxopimeloyl-[acyl-carrier-protein] synthase (343 aa).

Catalysis depends on residues cysteine 132 and histidine 272. Residues 273 to 277 (QANHR) form an ACP-binding region. The active site involves asparagine 302.

Belongs to the thiolase-like superfamily. BioZ family.

The enzyme catalyses malonyl-[ACP] + an acyl-CoA + H(+) = a 3-oxoacyl-[ACP] + CO2 + CoA. The catalysed reaction is glutaryl-CoA + malonyl-[ACP] + H(+) = 3-oxo-6-carboxyhexanoyl-[ACP] + CO2 + CoA. It functions in the pathway cofactor biosynthesis; biotin biosynthesis. Its function is as follows. Involved in the formation of the biotin precursor pimeloyl-ACP. Catalyzes the condensation of glutaryl-CoA, an intermediate in lysine degradation, with malonyl-ACP to produce 3-oxopimeloyl-ACP. This chain is 3-oxopimeloyl-[acyl-carrier-protein] synthase, found in Rhodothermus marinus (strain ATCC 43812 / DSM 4252 / R-10) (Rhodothermus obamensis).